The sequence spans 114 residues: MIKTLFNKNTALAAVAILALSGSAMAESAKTHKTDMAKKKVSELTCEDFNGLEESFKPTVVGWVVGFNKKGKEEDAVIDVDGIETVTPAIIEACKQEPKASFWKKAEAELKKVF.

Positions 1–26 (MIKTLFNKNTALAAVAILALSGSAMA) are cleaved as a signal peptide. An intrachain disulfide couples C46 to C94.

The protein belongs to the HdeA family.

Its subcellular location is the periplasm. In terms of biological role, required for optimal acid stress protection. Exhibits a chaperone-like activity only at low pH by suppressing non-specifically the aggregation of denaturated periplasmic proteins. The chain is Probable acid stress chaperone HdeA from Brucella ovis (strain ATCC 25840 / 63/290 / NCTC 10512).